Consider the following 176-residue polypeptide: Translation initiation factor IF-3 (176 aa).

It belongs to the IF-3 family. As to quaternary structure, monomer.

Its subcellular location is the cytoplasm. IF-3 binds to the 30S ribosomal subunit and shifts the equilibrium between 70S ribosomes and their 50S and 30S subunits in favor of the free subunits, thus enhancing the availability of 30S subunits on which protein synthesis initiation begins. The sequence is that of Translation initiation factor IF-3 from Microcystis aeruginosa (strain NIES-843 / IAM M-2473).